The sequence spans 218 residues: Ribose-5-phosphate isomerase A (218 aa).

Residues 28–31 (TGST), 81–84 (DGAD), and 94–97 (KGGG) each bind substrate. Catalysis depends on E103, which acts as the Proton acceptor. K121 lines the substrate pocket.

It belongs to the ribose 5-phosphate isomerase family. In terms of assembly, homodimer.

The catalysed reaction is aldehydo-D-ribose 5-phosphate = D-ribulose 5-phosphate. The protein operates within carbohydrate degradation; pentose phosphate pathway; D-ribose 5-phosphate from D-ribulose 5-phosphate (non-oxidative stage): step 1/1. Its function is as follows. Catalyzes the reversible conversion of ribose-5-phosphate to ribulose 5-phosphate. The polypeptide is Ribose-5-phosphate isomerase A (Vibrio cholerae serotype O1 (strain ATCC 39541 / Classical Ogawa 395 / O395)).